The following is a 210-amino-acid chain: Fibrillarin-like rRNA/tRNA 2'-O-methyltransferase (210 aa).

S-adenosyl-L-methionine-binding positions include 72–73 (TT), 88–89 (EF), 113–114 (DA), and 134–137 (DVAT).

This sequence belongs to the methyltransferase superfamily. Fibrillarin family. In terms of assembly, interacts with nop5. Component of box C/D small ribonucleoprotein (sRNP) particles that contain rpl7ae, FlpA and nop5, plus a guide RNA.

Functionally, involved in pre-rRNA and tRNA processing. Utilizes the methyl donor S-adenosyl-L-methionine to catalyze the site-specific 2'-hydroxyl methylation of ribose moieties in rRNA and tRNA. Site specificity is provided by a guide RNA that base pairs with the substrate. Methylation occurs at a characteristic distance from the sequence involved in base pairing with the guide RNA. The polypeptide is Fibrillarin-like rRNA/tRNA 2'-O-methyltransferase (Halobacterium salinarum (strain ATCC 29341 / DSM 671 / R1)).